We begin with the raw amino-acid sequence, 220 residues long: MOB kinase activator-like 3 (220 aa).

The Zn(2+) site is built by cysteine 83, cysteine 88, histidine 165, and histidine 170.

Belongs to the MOB1/phocein family.

This Drosophila melanogaster (Fruit fly) protein is MOB kinase activator-like 3 (Mob3).